The chain runs to 299 residues: Lathosterol oxidase (299 aa).

A run of 3 helical transmembrane segments spans residues 32–52 (ISLL…CATL), 79–99 (FTVK…LLEL), and 117–137 (IHLM…IYWI). The Fatty acid hydroxylase domain maps to 124 to 252 (VSFLFFTDML…YFTLWDRIGG (129 aa)). A Histidine box-1 motif is present at residues 138–143 (HRGLHH). A Histidine box-2 motif is present at residues 151–155 (HKPHH). The helical transmembrane segment at 186-206 (VFPLHKVVYLGLYVLVNVWTI) threads the bilayer. Residues 228-233 (HHTDHH) carry the Histidine box-3 motif. Ser253 is modified (phosphoserine). A disordered region spans residues 280–299 (FAENGCKGKKVGNGEFTKNK).

The protein belongs to the sterol desaturase family. Fe cation is required as a cofactor.

The protein resides in the endoplasmic reticulum membrane. The enzyme catalyses a Delta(7)-sterol + 2 Fe(II)-[cytochrome b5] + O2 + 2 H(+) = a Delta(5),Delta(7)-sterol + 2 Fe(III)-[cytochrome b5] + 2 H2O. The catalysed reaction is lathosterol + 2 Fe(II)-[cytochrome b5] + O2 + 2 H(+) = 7-dehydrocholesterol + 2 Fe(III)-[cytochrome b5] + 2 H2O. It catalyses the reaction 5alpha-cholesta-7,24-dien-3beta-ol + 2 Fe(II)-[cytochrome b5] + O2 + 2 H(+) = 7-dehydrodesmosterol + 2 Fe(III)-[cytochrome b5] + 2 H2O. Its pathway is steroid biosynthesis; cholesterol biosynthesis. Functionally, catalyzes the penultimate step of the biosynthesis of cholesterol, the dehydrogenation of lathosterol into 7-dehydrocholesterol (7-DHC). Cholesterol is the major sterol component in mammalian membranes and a precursor for bile acid and steroid hormone synthesis. In addition to its essential role in cholesterol biosynthesis, it also indirectly regulates ferroptosis through the production of 7-DHC. By diverting the spread of damage caused by peroxyl radicals from the phospholipid components to its sterol nucleus, 7-DHC prevents this form of cell death. The chain is Lathosterol oxidase from Mus musculus (Mouse).